Consider the following 161-residue polypeptide: Sec-independent protein translocase protein TatB (161 aa).

A helical membrane pass occupies residues 2 to 22 (FNDIGALELVTLVVLAVLVFG). The tract at residues 102-161 (DAVHGRDAESSSSGSSSGSSSAASGNGRVDMSKKPEKPEKPGKTDKPAADDRPPFDMDAT) is disordered. Positions 111 to 126 (SSSSGSSSGSSSAASG) are enriched in low complexity. Residues 131–161 (DMSKKPEKPEKPGKTDKPAADDRPPFDMDAT) are compositionally biased toward basic and acidic residues.

This sequence belongs to the TatB family. In terms of assembly, the Tat system comprises two distinct complexes: a TatABC complex, containing multiple copies of TatA, TatB and TatC subunits, and a separate TatA complex, containing only TatA subunits. Substrates initially bind to the TatABC complex, which probably triggers association of the separate TatA complex to form the active translocon.

The protein localises to the cell membrane. Its function is as follows. Part of the twin-arginine translocation (Tat) system that transports large folded proteins containing a characteristic twin-arginine motif in their signal peptide across membranes. Together with TatC, TatB is part of a receptor directly interacting with Tat signal peptides. TatB may form an oligomeric binding site that transiently accommodates folded Tat precursor proteins before their translocation. This Streptomyces coelicolor (strain ATCC BAA-471 / A3(2) / M145) protein is Sec-independent protein translocase protein TatB.